The chain runs to 301 residues: Recombination-associated protein RdgC (301 aa).

The protein belongs to the RdgC family.

The protein localises to the cytoplasm. It is found in the nucleoid. In terms of biological role, may be involved in recombination. The protein is Recombination-associated protein RdgC of Xanthomonas oryzae pv. oryzae (strain KACC10331 / KXO85).